We begin with the raw amino-acid sequence, 842 residues long: Protein translocase subunit SecA (842 aa).

Residues glutamine 85, glycine 103 to threonine 107, and aspartate 493 each bind ATP. 4 residues coordinate Zn(2+): cysteine 825, cysteine 827, cysteine 836, and histidine 837.

It belongs to the SecA family. As to quaternary structure, monomer and homodimer. Part of the essential Sec protein translocation apparatus which comprises SecA, SecYEG and auxiliary proteins SecDF. Other proteins may also be involved. It depends on Zn(2+) as a cofactor.

The protein resides in the cell membrane. It is found in the cytoplasm. It catalyses the reaction ATP + H2O + cellular proteinSide 1 = ADP + phosphate + cellular proteinSide 2.. Part of the Sec protein translocase complex. Interacts with the SecYEG preprotein conducting channel. Has a central role in coupling the hydrolysis of ATP to the transfer of proteins into and across the cell membrane, serving as an ATP-driven molecular motor driving the stepwise translocation of polypeptide chains across the membrane. In Streptococcus equi subsp. zooepidemicus (strain H70), this protein is Protein translocase subunit SecA.